The primary structure comprises 638 residues: Protein NSP-INTERACTING KINASE 1 (638 aa).

Residues 1–31 (MESTIVMMMMITRSFFCFLGFLCLLCSSVHG) form the signal peptide. Residues 32–248 (LLSPKGVNFE…AGGSRNHKMA (217 aa)) are Extracellular-facing. Residues asparagine 92 and asparagine 103 are each glycosylated (N-linked (GlcNAc...) asparagine). 4 LRR repeats span residues 104 to 128 (LTNLRIVLLQNNNIKGKIPAEIGRL), 130 to 152 (RLETLDLSDNFFHGEIPFSVGYL), 153 to 175 (QSLQYLRLNNNSLSGVFPLSLSN), and 177 to 200 (TQLAFLDLSYNNLSGPVPRFAAKT). Asparagine 162, asparagine 175, asparagine 188, asparagine 219, and asparagine 231 each carry an N-linked (GlcNAc...) asparagine glycan. A helical membrane pass occupies residues 249–269 (IAVGSSVGTVSLIFIAVGLFL). At 270–638 (WWRQRHNQNT…VQAMELSGPR (369 aa)) the chain is on the cytoplasmic side. Threonine 309 carries the post-translational modification Phosphothreonine. The 282-residue stretch at 312–593 (FSSKNLLGKG…EGDGLAEKWE (282 aa)) folds into the Protein kinase domain. 318–326 (LGKGGYGNV) contacts ATP. Threonine 335 bears the Phosphothreonine mark. Lysine 340 contributes to the ATP binding site. Serine 393 and serine 396 each carry phosphoserine. The tract at residues 422-502 (YLHEQCDPKI…DVFGFGILLL (81 aa)) is interaction with geminivirus NSP protein. The active-site Proton acceptor is the aspartate 435. Residues threonine 468, threonine 469, and threonine 474 each carry the phosphothreonine modification. Tyrosine 482 is subject to Phosphotyrosine. The residue at position 484 (serine 484) is a Phosphoserine. Threonine 485 carries the phosphothreonine modification. Serine 489 is modified (phosphoserine). Threonine 566 carries the post-translational modification Phosphothreonine.

The protein belongs to the protein kinase superfamily. Ser/Thr protein kinase family. In terms of assembly, oligomer. Interacts with geminivirus nuclear shuttle protein (NSP). Interacts with RPL10A and RPL18B. In terms of processing, autophosphorylated. As to expression, expressed in seedlings, leaves, roots, stems and flowers.

The protein resides in the cell membrane. The enzyme catalyses L-seryl-[protein] + ATP = O-phospho-L-seryl-[protein] + ADP + H(+). It catalyses the reaction L-threonyl-[protein] + ATP = O-phospho-L-threonyl-[protein] + ADP + H(+). Inhibited by the viral nuclear shuttle protein (NSP) that binds to the region required for oligomerization. Involved in defense response to geminivirus and begomovirus infection via regulation of the nuclear trafficking of RPL10A. Phosphorylates RPL10A in vitro. Activation of NIK1 down-regulates cytosolic translation. The sequence is that of Protein NSP-INTERACTING KINASE 1 from Arabidopsis thaliana (Mouse-ear cress).